We begin with the raw amino-acid sequence, 482 residues long: tRNA sulfurtransferase (482 aa).

Residues 61–165 enclose the THUMP domain; the sequence is LAIRDALTRI…DDRLLLIKGR (105 aa). Residues 183 to 184, K265, G287, and Q296 each bind ATP; that span reads LI. C344 and C456 are disulfide-bonded. The 79-residue stretch at 404 to 482 folds into the Rhodanese domain; that stretch reads FGPNDVILDI…GFANVKVYRP (79 aa). C456 acts as the Cysteine persulfide intermediate in catalysis.

The protein belongs to the ThiI family.

The protein localises to the cytoplasm. The enzyme catalyses [ThiI sulfur-carrier protein]-S-sulfanyl-L-cysteine + a uridine in tRNA + 2 reduced [2Fe-2S]-[ferredoxin] + ATP + H(+) = [ThiI sulfur-carrier protein]-L-cysteine + a 4-thiouridine in tRNA + 2 oxidized [2Fe-2S]-[ferredoxin] + AMP + diphosphate. The catalysed reaction is [ThiS sulfur-carrier protein]-C-terminal Gly-Gly-AMP + S-sulfanyl-L-cysteinyl-[cysteine desulfurase] + AH2 = [ThiS sulfur-carrier protein]-C-terminal-Gly-aminoethanethioate + L-cysteinyl-[cysteine desulfurase] + A + AMP + 2 H(+). It functions in the pathway cofactor biosynthesis; thiamine diphosphate biosynthesis. Functionally, catalyzes the ATP-dependent transfer of a sulfur to tRNA to produce 4-thiouridine in position 8 of tRNAs, which functions as a near-UV photosensor. Also catalyzes the transfer of sulfur to the sulfur carrier protein ThiS, forming ThiS-thiocarboxylate. This is a step in the synthesis of thiazole, in the thiamine biosynthesis pathway. The sulfur is donated as persulfide by IscS. This chain is tRNA sulfurtransferase, found in Salmonella choleraesuis (strain SC-B67).